The chain runs to 120 residues: UPF0231 protein KPK_4613 (120 aa).

It belongs to the UPF0231 family.

This Klebsiella pneumoniae (strain 342) protein is UPF0231 protein KPK_4613.